Here is a 79-residue protein sequence, read N- to C-terminus: Calcium/calmodulin-dependent protein kinase II inhibitor 2 (79 aa).

An inhibitory domain region spans residues 43–69 (KRPPKLGQIGRAKRVVIEDDRIDEVLK).

It belongs to the CAMK2N family.

It is found in the nucleus. The protein localises to the cytoplasm. The protein resides in the cytosol. Potent and specific cellular inhibitor of CaM-kinase II (CAMK2). Traps Ca(2+)/calmodulin on CAMK2. The protein is Calcium/calmodulin-dependent protein kinase II inhibitor 2 (camk2n2) of Xenopus laevis (African clawed frog).